A 238-amino-acid polypeptide reads, in one-letter code: Cysteine-rich venom protein pseudechetoxin-like (238 aa).

The first 19 residues, 1-19, serve as a signal peptide directing secretion; sequence MIAFIVLLSLAAVLQQSSG. Positions 20–28 are excised as a propeptide; that stretch reads TVDFASESS. The SCP domain occupies 38–164; sequence VDKHNALRRS…STKYLYVCQY (127 aa). 8 disulfide bridges follow: Cys-75–Cys-153, Cys-92–Cys-165, Cys-148–Cys-162, Cys-184–Cys-191, Cys-187–Cys-196, Cys-200–Cys-233, Cys-209–Cys-227, and Cys-218–Cys-231. A ShKT domain is found at 200–233; that stretch reads CKHEDDFSNCKALAKNSKCQTAWIKSKCPATCFC.

Belongs to the CRISP family. As to expression, expressed by the venom gland.

It localises to the secreted. Blocks olfactory (CNGA2) and retinal (CNGA1) CNG channel currents. Does not affect neither depolarization- nor caffeine-induced contraction of smooth muscle. This chain is Cysteine-rich venom protein pseudechetoxin-like, found in Hoplocephalus stephensii (Stephens's banded snake).